A 444-amino-acid polypeptide reads, in one-letter code: RING finger and transmembrane domain-containing protein 2 (444 aa).

Residues 1 to 181 (MWLFTVNQVL…ILLAKLCFQH (181 aa)) are Extracellular-facing. Disordered stretches follow at residues 13–41 (MQRR…ASVD) and 92–149 (PASR…PGTP). Residues 107-121 (YHHRQPHHHFHHGGH) are compositionally biased toward basic residues. The segment covering 131-140 (GGDHRGHSEE) has biased composition (basic and acidic residues). A helical membrane pass occupies residues 182 to 202 (KLGIAVCIGMASTFAYANSTL). Over 203 to 214 (REQVSLKEKRSV) the chain is Cytoplasmic. The helical transmembrane segment at 215–235 (LVILWILAFLAGNTLYVLYTF) threads the bilayer. Over 236 to 255 (SSQQLYNSLIFLKPNLETLD) the chain is Extracellular. A helical transmembrane segment spans residues 256-276 (FFDLLWIVGIADFVLKYITIA). The Cytoplasmic portion of the chain corresponds to 277–329 (LKCLIVALPKIILAVKSKGKFYLVIEELSQLFRSLVPIQLWYKYIMGDDSSNS). A helical transmembrane segment spans residues 330–350 (YFLGGVLIVLYSLCKSFDICG). Over 351–444 (RVGGVRKALK…GATSAHFQVY (94 aa)) the chain is Extracellular. The RING-type; degenerate zinc finger occupies 384 to 422 (CAICQAEFREPLILLCQHVFCEECLCLWLDRERTCPLSR).

It is found in the membrane. Its function is as follows. E3 ubiquitin-protein ligase that negatively regulates IL3-dependent cellular responses through IL3RA ubiquitination and degradation by the proteasome, having an anti-inflammatory effect. The chain is RING finger and transmembrane domain-containing protein 2 (RNFT2) from Pongo abelii (Sumatran orangutan).